The sequence spans 82 residues: ATP synthase subunit c (82 aa).

2 helical membrane passes run 7-27 (LVALACGLIVGLGAIGASIGI) and 53-73 (FILAGLIDAAFLIGVAIALLF).

The protein belongs to the ATPase C chain family. As to quaternary structure, F-type ATPases have 2 components, F(1) - the catalytic core - and F(0) - the membrane proton channel. F(1) has five subunits: alpha(3), beta(3), gamma(1), delta(1), epsilon(1). F(0) has three main subunits: a(1), b(2) and c(10-14). The alpha and beta chains form an alternating ring which encloses part of the gamma chain. F(1) is attached to F(0) by a central stalk formed by the gamma and epsilon chains, while a peripheral stalk is formed by the delta and b chains.

Its subcellular location is the cell inner membrane. Its function is as follows. F(1)F(0) ATP synthase produces ATP from ADP in the presence of a proton or sodium gradient. F-type ATPases consist of two structural domains, F(1) containing the extramembraneous catalytic core and F(0) containing the membrane proton channel, linked together by a central stalk and a peripheral stalk. During catalysis, ATP synthesis in the catalytic domain of F(1) is coupled via a rotary mechanism of the central stalk subunits to proton translocation. Functionally, key component of the F(0) channel; it plays a direct role in translocation across the membrane. A homomeric c-ring of between 10-14 subunits forms the central stalk rotor element with the F(1) delta and epsilon subunits. The protein is ATP synthase subunit c of Acidovorax ebreus (strain TPSY) (Diaphorobacter sp. (strain TPSY)).